The following is a 667-amino-acid chain: YTH domain-containing protein ECT2 (667 aa).

Disordered stretches follow at residues 264 to 305 and 379 to 398; these read QRPV…PSSV and NELN…GNLD. Positions 267 to 285 are enriched in low complexity; sequence VSGSGVASSYSKSSTVPSS. The span at 286-305 shows a compositional bias: polar residues; sequence RNQNYRSNSHYTSVHQPSSV. In terms of domain architecture, YTH spans 442–579; sequence AMFFIIKSYS…EQGLKIVKIF (138 aa). RNA contacts are provided by residues 448–450, Asp-454, 464–465, Asn-497, Trp-521, Trp-526, and Trp-534; these read KSY and WA. The disordered stretch occupies residues 606–667; sequence KAKQTQKQVS…VTGDVVANGC (62 aa). Basic and acidic residues predominate over residues 614–627; it reads VSEEKVTDEKKESA. Over residues 628–639 the composition is skewed to low complexity; it reads TAESASKESPAA.

Interacts (via C-terminus) with CIPK1. In terms of tissue distribution, expressed in the shoot apex, at the sites of leaf formation, and in emerging leaves. Highly expressed in rapidly developing tissues.

It localises to the cytoplasm. It is found in the nucleus. In terms of biological role, specifically recognizes and binds N6-methyladenosine (m6A)-containing RNAs, and regulates mRNA stability. M6A is a modification present at internal sites of mRNAs and some non-coding RNAs and plays a role in mRNA stability and processing. Binds preferentially in the 3'UTRs of target genes. May play dual roles in regulating 3'UTR processing in the nucleus and facilitating mRNA stability in the cytoplasm. Required for the correct timing of leaf formation and normal leaf morphology. Functions redundantly with ECT3. Required for proper trichome branching and morphology. Controls trichome morphology by binding transcripts related to trichome morphogenesis and affecting their stability. In Arabidopsis thaliana (Mouse-ear cress), this protein is YTH domain-containing protein ECT2.